Here is a 181-residue protein sequence, read N- to C-terminus: Translation initiation factor IF-3 (181 aa).

Belongs to the IF-3 family. Monomer.

It localises to the cytoplasm. In terms of biological role, IF-3 binds to the 30S ribosomal subunit and shifts the equilibrium between 70S ribosomes and their 50S and 30S subunits in favor of the free subunits, thus enhancing the availability of 30S subunits on which protein synthesis initiation begins. This chain is Translation initiation factor IF-3, found in Cereibacter sphaeroides (strain ATCC 17023 / DSM 158 / JCM 6121 / CCUG 31486 / LMG 2827 / NBRC 12203 / NCIMB 8253 / ATH 2.4.1.) (Rhodobacter sphaeroides).